Reading from the N-terminus, the 419-residue chain is Chaperone protein dnaJ 2 (419 aa).

Residues 14–75 form the J domain; it reads KFYEILGVPK…EKREIYDQYG (62 aa). Residues 136–220 form a CR-type zinc finger; sequence GTTKKLSLSR…CKGEKVVSEK (85 aa). Residues Cys-149, Cys-152, Cys-165, Cys-168, Cys-192, Cys-195, Cys-208, and Cys-211 each coordinate Zn(2+). CXXCXGXG motif repeat units lie at residues 149 to 156, 165 to 172, 192 to 199, and 208 to 215; these read CSKCNGKG, CGGCQGSG, CNDCKGTG, and CPQCKGEK. Basic and acidic residues predominate over residues 378 to 391; it reads TTLHDVNIEDEMKR. The segment at 378–419 is disordered; sequence TTLHDVNIEDEMKRKAQAQREAYDDDEEDHPGGAQRVQCAQQ. Cys-416 carries the cysteine methyl ester modification. Residue Cys-416 is the site of S-farnesyl cysteine attachment. Residues 417 to 419 constitute a propeptide, removed in mature form; sequence AQQ.

It belongs to the DnaJ family. A/I subfamily. Homodimer. Zn(2+) is required as a cofactor. Farnesylated. Expressed in both etiolated and light-grown tissues.

It localises to the membrane. Functionally, plays a continuous role in plant development probably in the structural organization of compartments. This chain is Chaperone protein dnaJ 2 (ATJ2), found in Arabidopsis thaliana (Mouse-ear cress).